A 506-amino-acid polypeptide reads, in one-letter code: Aminoaldehyde dehydrogenase 1b (506 aa).

A Na(+)-binding site is contributed by Asp-102. NAD(+) is bound by residues 162-164 (TPW) and 188-191 (KPSE). Leu-192 provides a ligand contact to Na(+). NAD(+) is bound by residues 242–245 (SFET) and Glu-263. Glu-263 (proton acceptor) is an active-site residue. The Nucleophile role is filled by Cys-297. Positions 396 and 462 each coordinate NAD(+).

Belongs to the aldehyde dehydrogenase family.

The catalysed reaction is 4-aminobutanal + NAD(+) + H2O = 4-aminobutanoate + NADH + 2 H(+). The enzyme catalyses 3-aminopropanal + NAD(+) + H2O = beta-alanine + NADH + 2 H(+). It carries out the reaction 4-(trimethylamino)butanal + NAD(+) + H2O = 4-(trimethylamino)butanoate + NADH + 2 H(+). It catalyses the reaction 4-guanidinobutanal + NAD(+) + H2O = 4-guanidinobutanoate + NADH + 2 H(+). The catalysed reaction is betaine aldehyde + NAD(+) + H2O = glycine betaine + NADH + 2 H(+). It functions in the pathway amine and polyamine biosynthesis; betaine biosynthesis via choline pathway; betaine from betaine aldehyde: step 1/1. Dehydrogenase that catalyzes the oxidation of several aminoaldehydes. Metabolizes and detoxifies aldehyde products of polyamine degradation to non-toxic amino acids. Catalyzes the oxidation of 4-aminobutanal and 3-aminopropanal to 4-aminobutanoate and beta-alanine, respectively. Catalyzes the oxidation of 4-(trimethylamino)butanal and 4-guanidinobutanal to 4-trimethylammoniobutanoate and 4-guanidinobutanoate, respectively. Catalyzes the oxidation of betaine aldehyde to glycine betaine. In Zea mays (Maize), this protein is Aminoaldehyde dehydrogenase 1b.